Here is a 354-residue protein sequence, read N- to C-terminus: Dual-specificity RNA methyltransferase RlmN (354 aa).

The active-site Proton acceptor is the glutamate 89. The region spanning 106–339 (KEAKYTVCVS…CTIRKSKGMD (234 aa)) is the Radical SAM core domain. An intrachain disulfide couples cysteine 113 to cysteine 344. Residues cysteine 120, cysteine 124, and cysteine 127 each coordinate [4Fe-4S] cluster. Residues 170–171 (GE), serine 202, 225–227 (SLH), and asparagine 301 each bind S-adenosyl-L-methionine. The S-methylcysteine intermediate role is filled by cysteine 344.

Belongs to the radical SAM superfamily. RlmN family. Requires [4Fe-4S] cluster as cofactor.

It is found in the cytoplasm. The enzyme catalyses adenosine(2503) in 23S rRNA + 2 reduced [2Fe-2S]-[ferredoxin] + 2 S-adenosyl-L-methionine = 2-methyladenosine(2503) in 23S rRNA + 5'-deoxyadenosine + L-methionine + 2 oxidized [2Fe-2S]-[ferredoxin] + S-adenosyl-L-homocysteine. It carries out the reaction adenosine(37) in tRNA + 2 reduced [2Fe-2S]-[ferredoxin] + 2 S-adenosyl-L-methionine = 2-methyladenosine(37) in tRNA + 5'-deoxyadenosine + L-methionine + 2 oxidized [2Fe-2S]-[ferredoxin] + S-adenosyl-L-homocysteine. Specifically methylates position 2 of adenine 2503 in 23S rRNA and position 2 of adenine 37 in tRNAs. m2A2503 modification seems to play a crucial role in the proofreading step occurring at the peptidyl transferase center and thus would serve to optimize ribosomal fidelity. In Nautilia profundicola (strain ATCC BAA-1463 / DSM 18972 / AmH), this protein is Dual-specificity RNA methyltransferase RlmN.